We begin with the raw amino-acid sequence, 43 residues long: Cytochrome b559 subunit beta (43 aa).

The helical transmembrane segment at 18–34 (WLAVHTLAIPTVFFLGA) threads the bilayer. H22 contributes to the heme binding site.

The protein belongs to the PsbE/PsbF family. As to quaternary structure, heterodimer of an alpha subunit and a beta subunit. PSII is composed of 1 copy each of membrane proteins PsbA, PsbB, PsbC, PsbD, PsbE, PsbF, PsbH, PsbI, PsbJ, PsbK, PsbL, PsbM, PsbT, PsbX, PsbY, PsbZ, Psb30/Ycf12, peripheral proteins PsbO, CyanoQ (PsbQ), PsbU, PsbV and a large number of cofactors. It forms dimeric complexes. Heme b is required as a cofactor.

It localises to the cellular thylakoid membrane. This b-type cytochrome is tightly associated with the reaction center of photosystem II (PSII). PSII is a light-driven water:plastoquinone oxidoreductase that uses light energy to abstract electrons from H(2)O, generating O(2) and a proton gradient subsequently used for ATP formation. It consists of a core antenna complex that captures photons, and an electron transfer chain that converts photonic excitation into a charge separation. The chain is Cytochrome b559 subunit beta from Synechococcus sp. (strain JA-2-3B'a(2-13)) (Cyanobacteria bacterium Yellowstone B-Prime).